We begin with the raw amino-acid sequence, 632 residues long: Extracellular metalloproteinase 2 (632 aa).

Positions 1-19 are cleaved as a signal peptide; the sequence is MHGLLLAGLAAALPLGVAG. Positions 20 to 244 are excised as a propeptide; sequence LPARQQSGLS…VHNVVDYVAS (225 aa). N-linked (GlcNAc...) asparagine glycosylation occurs at N270. Zn(2+) is bound at residue H429. E430 is an active-site residue. Position 433 (H433) interacts with Zn(2+).

It belongs to the peptidase M36 family. Zn(2+) serves as cofactor.

The protein localises to the secreted. In terms of biological role, secreted metalloproteinase probably acting as a virulence factor. The chain is Extracellular metalloproteinase 2 (MEP2) from Arthroderma benhamiae (Trichophyton mentagrophytes).